The primary structure comprises 372 residues: Dual-specificity RNA methyltransferase RlmN (372 aa).

The Proton acceptor role is filled by Glu-97. Residues 103 to 340 (ETDRKTLCVS…AVVRKNRGTD (238 aa)) enclose the Radical SAM core domain. Residues Cys-110 and Cys-345 are joined by a disulfide bond. Residues Cys-117, Cys-121, and Cys-124 each coordinate [4Fe-4S] cluster. S-adenosyl-L-methionine is bound by residues 172 to 173 (GE), Ser-204, 226 to 228 (SLN), and Asn-302. The active-site S-methylcysteine intermediate is the Cys-345. The tract at residues 350-372 (AEGGPGDPRRRAAAALTGTPAAG) is disordered. Residues 362 to 372 (AAALTGTPAAG) are compositionally biased toward low complexity.

The protein belongs to the radical SAM superfamily. RlmN family. [4Fe-4S] cluster is required as a cofactor.

The protein resides in the cytoplasm. It carries out the reaction adenosine(2503) in 23S rRNA + 2 reduced [2Fe-2S]-[ferredoxin] + 2 S-adenosyl-L-methionine = 2-methyladenosine(2503) in 23S rRNA + 5'-deoxyadenosine + L-methionine + 2 oxidized [2Fe-2S]-[ferredoxin] + S-adenosyl-L-homocysteine. It catalyses the reaction adenosine(37) in tRNA + 2 reduced [2Fe-2S]-[ferredoxin] + 2 S-adenosyl-L-methionine = 2-methyladenosine(37) in tRNA + 5'-deoxyadenosine + L-methionine + 2 oxidized [2Fe-2S]-[ferredoxin] + S-adenosyl-L-homocysteine. Its function is as follows. Specifically methylates position 2 of adenine 2503 in 23S rRNA and position 2 of adenine 37 in tRNAs. m2A2503 modification seems to play a crucial role in the proofreading step occurring at the peptidyl transferase center and thus would serve to optimize ribosomal fidelity. The chain is Dual-specificity RNA methyltransferase RlmN from Anaeromyxobacter dehalogenans (strain 2CP-C).